The primary structure comprises 800 residues: MAVSKITLHYAQTTGGSNEAAAAFPWNTPKKAVNPYLDPAEFAPESALSNLIALYAVDNEQEQLRRETLSDEVWERYFFNESRDPVQREMEQDRLISHAKTAREQQRFNPDLVIIANVGAQPAHISKPLLERIKYFHSLGRAKAYSRYLQKTIRPCLERLERVRDSQVSASFRFMASHDGLEGLLVLPEMNQDQVKRLSTLVAAHMSMCLDAACGDLFVSDDVKPEEIRQAWERVAAEAMRLEVIPPAFEQLRRKKRRRKPVPYELIPPSLARMLCADWWYRKLWQMRCEWREEQLRAVCLVNKKASPYVSYEAVIHKREQRRKSLEFFRSHELINEDGDTLDMEDVVNASNSNPAHRRNEMMACVKGLELIAEMRGDCAVFYTITCPSRFHATLNNGRPNPKWTSATVRQSSDYLVDTFAAFRKAMHKAGLRWYGVRVAEPHHDGTVHWHLLCFMRKKDRRSITALLRKFAIREDREELGANTGPRFKPELINPRKGTPTSYIAKYISKNIDGRGLAKEISKETGRSLRDSAEHVSAWASLHRVQQFRFFGIPGRQAYRELRLLAGQAARVQGERKAGAPVLDNPRLDAVLAAADAGCFATYIMKQGGVLVPRKHHLVRTAYELNDEPSAYGDHGIRIYGIWSPIAEGKICTHAVKWKKVRKAVDVQEAAADQGACAPWTRGNNCPPVENLNKSGGDLPDIKTMNEKELQDYLHNMGQKERRELTARLRLVKPKRKTVYKQNISEQQRLQLEAELTARGFEGSASEIDLLLRGGSIPSGAGLRIFYRNHRLQEDDKWRQ.

Residues Tyr-503 and Tyr-507 each act as O-(5'-phospho-DNA)-tyrosine intermediate in the active site.

The protein belongs to the phage GPA family.

Functionally, possible endonuclease which induces a single-strand cut and initiates DNA replication. This Salmonella paratyphi A (strain ATCC 9150 / SARB42) protein is Probable replication endonuclease from prophage-like region.